We begin with the raw amino-acid sequence, 304 residues long: Recombination-associated protein RdgC (304 aa).

This sequence belongs to the RdgC family.

The protein resides in the cytoplasm. The protein localises to the nucleoid. Its function is as follows. May be involved in recombination. The sequence is that of Recombination-associated protein RdgC from Shewanella sp. (strain ANA-3).